Reading from the N-terminus, the 751-residue chain is Zinc finger protein 337 (751 aa).

One can recognise a KRAB domain in the interval 12-83 (LAFGDVTVDF…ERRRRPGPCA (72 aa)). Over residues 101-116 (QRQQQLQFSDQSFQSD) the composition is skewed to low complexity. Residues 101–163 (QRQQQLQFSD…SSQGQRENPT (63 aa)) form a disordered region. The segment at 180 to 202 (FKCAERGQDFSRKMMVIIHKKAH) adopts a C2H2-type 1; degenerate zinc-finger fold. 9 C2H2-type zinc fingers span residues 208–230 (FTCR…QNTH), 236–258 (YVCS…QRTH), 264–286 (FLCK…ERTH), 292–314 (YECQ…LKAH), 320–342 (FVCK…KRIH), 348–370 (YRCQ…QRTH), 376–398 (FACR…QRTH), 404–426 (FVCK…QRTH), and 432–454 (FVCR…QITH). K458 is covalently cross-linked (Glycyl lysine isopeptide (Lys-Gly) (interchain with G-Cter in SUMO2)). 10 consecutive C2H2-type zinc fingers follow at residues 460–482 (FVCK…QRTH), 488–510 (YGCR…LRAH), 516–538 (FFCR…QRTH), 544–566 (FMCK…QWTH), 572–594 (FNCK…QKTH), 600–622 (FICS…QLAH), 628–650 (FVCK…QRTH), 656–679 (FVCN…WRIH), 685–707 (FVCQ…ERIH), and 713–735 (YECQ…LKRH).

This sequence belongs to the krueppel C2H2-type zinc-finger protein family.

The protein localises to the nucleus. In terms of biological role, may be involved in transcriptional regulation. The sequence is that of Zinc finger protein 337 (ZNF337) from Homo sapiens (Human).